The chain runs to 590 residues: Oligoendopeptidase F homolog (590 aa).

Zn(2+) is bound at residue His381. Glu382 is a catalytic residue. The Zn(2+) site is built by His385 and His388.

Belongs to the peptidase M3B family. Requires Zn(2+) as cofactor.

The sequence is that of Oligoendopeptidase F homolog (pepF) from Borreliella burgdorferi (strain ATCC 35210 / DSM 4680 / CIP 102532 / B31) (Borrelia burgdorferi).